A 514-amino-acid polypeptide reads, in one-letter code: MAKISEFERQRQENIQRNKELLKSLNLDSLSQSIKRELPRASETKKRKTTPRTKAVKKEDVEPSRRSRRIAGIKSELENPEEYNHKKSGSLKFEDKVIKSDSTEPEVKQEEKEELSEDIKNDNKVLHRLQALGDKFSAGDFFDIIQKNPIQYDDKVLQSTRDEFDKLKIYEKHNPLDIKISHTRITAINFHPSTTDRVVAAGDTNGNVGIWAVDSGEDDSEPTISILRPHGKAISRILTPVAEQNKLYSASYDGSVRVLDLNKLASTEVVYLNDPYENDDYALGVSDINFCASDANLLYMTTLSGSFHKHDIRTPFKPLKSKDILRLHDKKIGSFSINPNNTYQIATASLDRTLRIWDLRNVSKANAEWSEFENQISPHLYGSFSSRLSVSCVDWNSENRLVCNGYDDYINIFDLNEESLIPDNLKAFNKIKHNCQTGRWVSILKSKWQVAPEDGVQKFVIANMNRALDIYDQKGQIIAHLTDSVGAVPAVCGFHPTKNWVVGGSASGKVYLFE.

Residues 26–116 (NLDSLSQSIK…VKQEEKEELS (91 aa)) are disordered. Basic and acidic residues predominate over residues 34–44 (IKRELPRASET). Over residues 45 to 55 (KKRKTTPRTKA) the composition is skewed to basic residues. Basic and acidic residues-rich tracts occupy residues 56 to 65 (VKKEDVEPSR) and 92 to 116 (KFED…EELS). 7 WD repeats span residues 180–221 (ISHT…DDSE), 229–269 (PHGK…STEV), 280–320 (DYAL…KPLK), 327–367 (LHDK…KANA), 385–423 (SSRL…LIPD), 438–481 (GRWV…IAHL), and 483–514 (DSVG…YLFE).

It belongs to the WD repeat DDB2/WDR76 family.

In terms of biological role, DNA-binding protein that binds to both single- and double-stranded DNA. Binds preferentially to UV-damaged DNA. May be involved in DNA-metabolic processes. The sequence is that of DNA damage-binding protein CMR1 (PRW1) from Scheffersomyces stipitis (strain ATCC 58785 / CBS 6054 / NBRC 10063 / NRRL Y-11545) (Yeast).